A 425-amino-acid polypeptide reads, in one-letter code: Formyl-CoA:oxalate CoA-transferase (425 aa).

Residues 17–18 (QS), R38, 72–75 (LDTK), 96–98 (NFG), R104, and 136–139 (KVYE) each bind CoA. D168 functions as the Nucleophile in the catalytic mechanism. Residue 247–249 (GGQ) participates in substrate binding.

The protein belongs to the CoA-transferase III family. Frc subfamily. As to quaternary structure, homodimer.

It catalyses the reaction formyl-CoA + oxalate = oxalyl-CoA + formate. It participates in metabolic intermediate degradation; oxalate degradation; CO(2) and formate from oxalate: step 1/2. Functionally, involved in the catabolism of oxalate and in the adapatation to low pH via the induction of the oxalate-dependent acid tolerance response (ATR). Catalyzes the transfer of the CoA moiety from formyl-CoA to oxalate. In Rhodopseudomonas palustris (strain TIE-1), this protein is Formyl-CoA:oxalate CoA-transferase.